A 67-amino-acid chain; its full sequence is UPF0434 protein Reut_A0592 (67 aa).

This sequence belongs to the UPF0434 family.

This is UPF0434 protein Reut_A0592 from Cupriavidus pinatubonensis (strain JMP 134 / LMG 1197) (Cupriavidus necator (strain JMP 134)).